The following is a 213-amino-acid chain: Adenylate kinase (213 aa).

10-15 (GAGKGT) contributes to the ATP binding site. The NMP stretch occupies residues 30–59 (STGDMFRAAMANQTEMGLLAKSYIDKGDLV). Residues Thr31, Arg36, 57–59 (DLV), 86–89 (GYPR), and Gln93 contribute to the AMP site. Residues 127–160 (GRIIHKKTGETFHKIFNPPAGDYDENDYYQREDD) form an LID region. ATP-binding positions include Arg128 and 137-138 (TF). Positions 157 and 168 each coordinate AMP. Gln196 provides a ligand contact to ATP.

Belongs to the adenylate kinase family. Monomer.

The protein resides in the cytoplasm. It carries out the reaction AMP + ATP = 2 ADP. The protein operates within purine metabolism; AMP biosynthesis via salvage pathway; AMP from ADP: step 1/1. Functionally, catalyzes the reversible transfer of the terminal phosphate group between ATP and AMP. Plays an important role in cellular energy homeostasis and in adenine nucleotide metabolism. The protein is Adenylate kinase of Streptococcus uberis (strain ATCC BAA-854 / 0140J).